The chain runs to 249 residues: Probable septum site-determining protein MinC (249 aa).

Positions 115–141 (KPAQEAPAQAEPEAAAAPEPANEPAPA) are disordered. The segment covering 118–141 (QEAPAQAEPEAAAAPEPANEPAPA) has biased composition (low complexity).

It belongs to the MinC family. Interacts with MinD and FtsZ.

In terms of biological role, cell division inhibitor that blocks the formation of polar Z ring septums. Rapidly oscillates between the poles of the cell to destabilize FtsZ filaments that have formed before they mature into polar Z rings. Prevents FtsZ polymerization. This chain is Probable septum site-determining protein MinC, found in Marinobacter nauticus (strain ATCC 700491 / DSM 11845 / VT8) (Marinobacter aquaeolei).